The following is a 172-amino-acid chain: Phosphopantetheine adenylyltransferase (172 aa).

Thr-14 is a binding site for substrate. ATP is bound by residues 14 to 15 (TF) and His-22. The substrate site is built by Lys-46, Leu-78, and Arg-92. Residues 93–95 (GMR), Glu-103, and 128–134 (WLYISST) each bind ATP.

This sequence belongs to the bacterial CoaD family. As to quaternary structure, homohexamer. The cofactor is Mg(2+).

The protein localises to the cytoplasm. The enzyme catalyses (R)-4'-phosphopantetheine + ATP + H(+) = 3'-dephospho-CoA + diphosphate. Its pathway is cofactor biosynthesis; coenzyme A biosynthesis; CoA from (R)-pantothenate: step 4/5. Functionally, reversibly transfers an adenylyl group from ATP to 4'-phosphopantetheine, yielding dephospho-CoA (dPCoA) and pyrophosphate. The protein is Phosphopantetheine adenylyltransferase of Solidesulfovibrio magneticus (strain ATCC 700980 / DSM 13731 / RS-1) (Desulfovibrio magneticus).